The primary structure comprises 493 residues: NADH-quinone oxidoreductase subunit N 2 (493 aa).

The next 14 helical transmembrane spans lie at I16–I36, F45–Q65, G87–S107, G119–T139, L141–F161, L176–I196, V219–F239, L258–L278, W285–I305, L313–N333, I340–A360, A385–L405, G421–V441, and C464–L484.

Belongs to the complex I subunit 2 family. As to quaternary structure, NDH-1 is composed of 14 different subunits. Subunits NuoA, H, J, K, L, M, N constitute the membrane sector of the complex.

The protein localises to the cell inner membrane. It catalyses the reaction a quinone + NADH + 5 H(+)(in) = a quinol + NAD(+) + 4 H(+)(out). Its function is as follows. NDH-1 shuttles electrons from NADH, via FMN and iron-sulfur (Fe-S) centers, to quinones in the respiratory chain. The immediate electron acceptor for the enzyme in this species is believed to be ubiquinone. Couples the redox reaction to proton translocation (for every two electrons transferred, four hydrogen ions are translocated across the cytoplasmic membrane), and thus conserves the redox energy in a proton gradient. The protein is NADH-quinone oxidoreductase subunit N 2 of Solibacter usitatus (strain Ellin6076).